Here is a 352-residue protein sequence, read N- to C-terminus: UDP-3-O-acylglucosamine N-acyltransferase (352 aa).

The active-site Proton acceptor is histidine 246.

It belongs to the transferase hexapeptide repeat family. LpxD subfamily. In terms of assembly, homotrimer.

It carries out the reaction a UDP-3-O-[(3R)-3-hydroxyacyl]-alpha-D-glucosamine + a (3R)-hydroxyacyl-[ACP] = a UDP-2-N,3-O-bis[(3R)-3-hydroxyacyl]-alpha-D-glucosamine + holo-[ACP] + H(+). It participates in bacterial outer membrane biogenesis; LPS lipid A biosynthesis. Catalyzes the N-acylation of UDP-3-O-acylglucosamine using 3-hydroxyacyl-ACP as the acyl donor. Is involved in the biosynthesis of lipid A, a phosphorylated glycolipid that anchors the lipopolysaccharide to the outer membrane of the cell. The sequence is that of UDP-3-O-acylglucosamine N-acyltransferase from Chlorobium luteolum (strain DSM 273 / BCRC 81028 / 2530) (Pelodictyon luteolum).